The following is a 152-amino-acid chain: Transcriptional regulator MraZ (152 aa).

2 consecutive SpoVT-AbrB domains span residues 5–52 (ATLV…PLPE) and 81–124 (ASEC…DETT).

It belongs to the MraZ family. As to quaternary structure, forms oligomers.

It is found in the cytoplasm. Its subcellular location is the nucleoid. In terms of biological role, negatively regulates its own expression and that of the subsequent genes in the proximal part of the division and cell wall (dcw) gene cluster. Acts by binding directly to DNA. May also regulate the expression of genes outside the dcw cluster. This chain is Transcriptional regulator MraZ, found in Klebsiella pneumoniae (strain 342).